The sequence spans 913 residues: Alanine--tRNA ligase (913 aa).

The Zn(2+) site is built by histidine 600, histidine 604, cysteine 703, and histidine 707.

This sequence belongs to the class-II aminoacyl-tRNA synthetase family. Requires Zn(2+) as cofactor.

The protein localises to the cytoplasm. The enzyme catalyses tRNA(Ala) + L-alanine + ATP = L-alanyl-tRNA(Ala) + AMP + diphosphate. Its function is as follows. Catalyzes the attachment of alanine to tRNA(Ala) in a two-step reaction: alanine is first activated by ATP to form Ala-AMP and then transferred to the acceptor end of tRNA(Ala). Also edits incorrectly charged Ser-tRNA(Ala) and Gly-tRNA(Ala) via its editing domain. This Methanothrix thermoacetophila (strain DSM 6194 / JCM 14653 / NBRC 101360 / PT) (Methanosaeta thermophila) protein is Alanine--tRNA ligase.